The sequence spans 125 residues: Late histone H2A.1 (125 aa).

Over residues 1–18 (MSGRGKGKAKGTKSKTRS) the composition is skewed to basic residues. The interval 1 to 21 (MSGRGKGKAKGTKSKTRSSRA) is disordered. Ser-2 carries the N-acetylserine modification. Phosphoserine is present on Ser-2. Gln-104 is subject to N5-methylglutamine. Residue Lys-119 forms a Glycyl lysine isopeptide (Lys-Gly) (interchain with G-Cter in ubiquitin) linkage.

Belongs to the histone H2A family. In terms of assembly, the nucleosome is a histone octamer containing two molecules each of H2A, H2B, H3 and H4 assembled in one H3-H4 heterotetramer and two H2A-H2B heterodimers. The octamer wraps approximately 147 bp of DNA. Post-translationally, monoubiquitination of Lys-119 gives a specific tag for epigenetic transcriptional repression. Phosphorylation of Ser-2 directly represses transcription.

It is found in the nucleus. It localises to the chromosome. Its function is as follows. Core component of nucleosome. Nucleosomes wrap and compact DNA into chromatin, limiting DNA accessibility to the cellular machineries which require DNA as a template. Histones thereby play a central role in transcription regulation, DNA repair, DNA replication and chromosomal stability. DNA accessibility is regulated via a complex set of post-translational modifications of histones, also called histone code, and nucleosome remodeling. The sequence is that of Late histone H2A.1 from Psammechinus miliaris (Green sea urchin).